A 156-amino-acid polypeptide reads, in one-letter code: 3-hydroxyacyl-[acyl-carrier-protein] dehydratase FabZ (156 aa).

Residue H54 is part of the active site.

It belongs to the thioester dehydratase family. FabZ subfamily.

The protein localises to the cytoplasm. It carries out the reaction a (3R)-hydroxyacyl-[ACP] = a (2E)-enoyl-[ACP] + H2O. Involved in unsaturated fatty acids biosynthesis. Catalyzes the dehydration of short chain beta-hydroxyacyl-ACPs and long chain saturated and unsaturated beta-hydroxyacyl-ACPs. The sequence is that of 3-hydroxyacyl-[acyl-carrier-protein] dehydratase FabZ from Koribacter versatilis (strain Ellin345).